We begin with the raw amino-acid sequence, 1191 residues long: Probable inositol polyphosphate 5-phosphatase C9G1.10c (1191 aa).

Polar residues-rich tracts occupy residues 1–10 (MASRQGFSNV), 72–101 (QVSS…NPSN), 114–135 (SDSS…SFVS), 151–161 (SFQSSVQSTKG), and 181–193 (NFSS…SPIS). The disordered stretch occupies residues 1–193 (MASRQGFSNV…SKAGSSSPIS (193 aa)). Serine 195 is modified (phosphoserine). 3 disordered regions span residues 205–281 (SQSP…PQPV), 294–334 (SQQL…DASL), and 355–425 (IPEK…SSSS). Residues 268 to 280 (TPPPIPSPRPPQP) are compositionally biased toward pro residues. The span at 302–311 (SPRKPPKPPL) shows a compositional bias: basic residues. 3 stretches are compositionally biased toward polar residues: residues 316–334 (TQRS…DASL), 367–382 (HTLS…SENL), and 400–413 (LATN…VSTE). Residues 414–425 (QSDPSVAASSSS) are compositionally biased toward low complexity.

It belongs to the inositol 1,4,5-trisphosphate 5-phosphatase family.

It localises to the cytoplasm. The protein is Probable inositol polyphosphate 5-phosphatase C9G1.10c of Schizosaccharomyces pombe (strain 972 / ATCC 24843) (Fission yeast).